Here is a 134-residue protein sequence, read N- to C-terminus: Ribulose bisphosphate carboxylase small subunit (134 aa).

It belongs to the RuBisCO small chain family. As to quaternary structure, heterohexadecamer of 8 large and 8 small subunits.

Its function is as follows. RuBisCO catalyzes two reactions: the carboxylation of D-ribulose 1,5-bisphosphate, the primary event in carbon dioxide fixation, as well as the oxidative fragmentation of the pentose substrate. Both reactions occur simultaneously and in competition at the same active site. Although the small subunit is not catalytic it is essential for maximal activity. This is Ribulose bisphosphate carboxylase small subunit from Bradyrhizobium diazoefficiens (strain JCM 10833 / BCRC 13528 / IAM 13628 / NBRC 14792 / USDA 110).